The primary structure comprises 143 residues: Transcription antitermination protein NusB (143 aa).

This sequence belongs to the NusB family.

Functionally, involved in transcription antitermination. Required for transcription of ribosomal RNA (rRNA) genes. Binds specifically to the boxA antiterminator sequence of the ribosomal RNA (rrn) operons. The sequence is that of Transcription antitermination protein NusB from Desulforapulum autotrophicum (strain ATCC 43914 / DSM 3382 / VKM B-1955 / HRM2) (Desulfobacterium autotrophicum).